The sequence spans 222 residues: Probable transaldolase 2 (222 aa).

The active-site Schiff-base intermediate with substrate is K90.

Belongs to the transaldolase family. Type 3B subfamily.

The protein resides in the cytoplasm. It carries out the reaction D-sedoheptulose 7-phosphate + D-glyceraldehyde 3-phosphate = D-erythrose 4-phosphate + beta-D-fructose 6-phosphate. Its pathway is carbohydrate degradation; pentose phosphate pathway; D-glyceraldehyde 3-phosphate and beta-D-fructose 6-phosphate from D-ribose 5-phosphate and D-xylulose 5-phosphate (non-oxidative stage): step 2/3. Its function is as follows. Transaldolase is important for the balance of metabolites in the pentose-phosphate pathway. The sequence is that of Probable transaldolase 2 from Bacillus cereus (strain ATCC 14579 / DSM 31 / CCUG 7414 / JCM 2152 / NBRC 15305 / NCIMB 9373 / NCTC 2599 / NRRL B-3711).